The following is a 521-amino-acid chain: Cytochrome P450 1A1 (521 aa).

Substrate is bound at residue Phe-229. Residue Cys-463 coordinates heme.

It belongs to the cytochrome P450 family. It depends on heme as a cofactor.

It localises to the endoplasmic reticulum membrane. It is found in the microsome membrane. The enzyme catalyses an organic molecule + reduced [NADPH--hemoprotein reductase] + O2 = an alcohol + oxidized [NADPH--hemoprotein reductase] + H2O + H(+). Cytochromes P450 are a group of heme-thiolate monooxygenases. They oxidize a variety of structurally unrelated compounds, including steroids, fatty acids, and xenobiotics. The polypeptide is Cytochrome P450 1A1 (cyp1a1) (Sparus aurata (Gilthead sea bream)).